The following is a 1058-amino-acid chain: Ubiquitin-like modifier-activating enzyme 1 Y (1058 aa).

Positions 1 to 22 (MSSSVLSKKRKVSGPDSSLDSS) are disordered. Residues A477, D503, R514, K527, and 575-576 (DN) contribute to the ATP site. C631 serves as the catalytic Glycyl thioester intermediate.

The protein belongs to the ubiquitin-activating E1 family. As to quaternary structure, monomer. Expressed in testis in A spermatogonia and spermatids but not (or at very low levels) in pachytene spermatocytes. Also expressed in Y-bearing ovaries and at very low levels in adrenal gland.

It catalyses the reaction ATP + ubiquitin + [E1 ubiquitin-activating enzyme]-L-cysteine = AMP + diphosphate + S-ubiquitinyl-[E1 ubiquitin-activating enzyme]-L-cysteine.. Its pathway is protein modification; protein ubiquitination. Its function is as follows. Activates ubiquitin by first adenylating its C-terminal glycine residue with ATP, and thereafter linking this residue to the side chain of a cysteine residue in E1, yielding a ubiquitin-E1 thioester and free AMP. The Y chromosome form could be involved in the survival and proliferation of differentiating spermatogonia. The chain is Ubiquitin-like modifier-activating enzyme 1 Y (Uba1y) from Mus musculus (Mouse).